The sequence spans 213 residues: Peptidoglycan-N-acetylglucosamine deacetylase BC_3618 (213 aa).

Positions 22 to 203 constitute a NodB homology domain; it reads KIIAITFDDG…ELKKQGYRFV (182 aa). The active-site Proton acceptor is the Asp-29. Asp-30, His-80, and His-84 together coordinate Zn(2+). His-175 serves as the catalytic Proton donor.

It belongs to the polysaccharide deacetylase family. It depends on Zn(2+) as a cofactor.

It catalyses the reaction peptidoglycan-N-acetyl-D-glucosamine + H2O = peptidoglycan-D-glucosamine + acetate.. Its activity is regulated as follows. Inhibited by CuCl(2) and ZnCl(2). Its function is as follows. Catalyzes the deacetylation of N-acetylglucosamine (GlcNAc) residues in peptidoglycan. Also acts on soluble chitin substrates and N-acetylchitooligomers. Acts on cell wall peptidoglycan from the Gram-positive bacteria B.cereus and B.subtilis and the Gram-negative bacterium H.pylori. Not active on acetylated xylan. This Bacillus cereus (strain ATCC 14579 / DSM 31 / CCUG 7414 / JCM 2152 / NBRC 15305 / NCIMB 9373 / NCTC 2599 / NRRL B-3711) protein is Peptidoglycan-N-acetylglucosamine deacetylase BC_3618.